A 193-amino-acid chain; its full sequence is NADH-quinone oxidoreductase subunit B (193 aa).

Residues C72, C73, C137, and C167 each contribute to the [4Fe-4S] cluster site.

This sequence belongs to the complex I 20 kDa subunit family. As to quaternary structure, NDH-1 is composed of 14 different subunits. Subunits NuoB, C, D, E, F, and G constitute the peripheral sector of the complex. It depends on [4Fe-4S] cluster as a cofactor.

The protein resides in the cell inner membrane. It catalyses the reaction a quinone + NADH + 5 H(+)(in) = a quinol + NAD(+) + 4 H(+)(out). In terms of biological role, NDH-1 shuttles electrons from NADH, via FMN and iron-sulfur (Fe-S) centers, to quinones in the respiratory chain. The immediate electron acceptor for the enzyme in this species is believed to be ubiquinone. Couples the redox reaction to proton translocation (for every two electrons transferred, four hydrogen ions are translocated across the cytoplasmic membrane), and thus conserves the redox energy in a proton gradient. This chain is NADH-quinone oxidoreductase subunit B, found in Bradyrhizobium sp. (strain ORS 278).